The primary structure comprises 569 residues: Glucose-6-phosphate isomerase, cytosolic 2 (569 aa).

Catalysis depends on glutamate 360, which acts as the Proton donor. Catalysis depends on residues histidine 391 and lysine 516.

The protein belongs to the GPI family. Homodimer.

It localises to the cytoplasm. The enzyme catalyses alpha-D-glucose 6-phosphate = beta-D-fructose 6-phosphate. The protein operates within carbohydrate degradation; glycolysis; D-glyceraldehyde 3-phosphate and glycerone phosphate from D-glucose: step 2/4. This Clarkia concinna (Red ribbons) protein is Glucose-6-phosphate isomerase, cytosolic 2 (PGIC2).